A 124-amino-acid chain; its full sequence is Large ribosomal subunit protein bL12 (124 aa).

The protein belongs to the bacterial ribosomal protein bL12 family. As to quaternary structure, homodimer. Part of the ribosomal stalk of the 50S ribosomal subunit. Forms a multimeric L10(L12)X complex, where L10 forms an elongated spine to which 2 to 4 L12 dimers bind in a sequential fashion. Binds GTP-bound translation factors.

Functionally, forms part of the ribosomal stalk which helps the ribosome interact with GTP-bound translation factors. Is thus essential for accurate translation. This chain is Large ribosomal subunit protein bL12, found in Anaeromyxobacter dehalogenans (strain 2CP-C).